The chain runs to 359 residues: Homoserine O-acetyltransferase (359 aa).

Residues 49–332 enclose the AB hydrolase-1 domain; the sequence is VLICHALTGS…QSSYGHDAFL (284 aa). Ser143 (nucleophile) is an active-site residue. Arg212 contacts substrate. Active-site residues include Asp299 and His328. Residue Asp329 coordinates substrate.

Belongs to the AB hydrolase superfamily. MetX family. Homodimer.

The protein localises to the cytoplasm. It carries out the reaction L-homoserine + acetyl-CoA = O-acetyl-L-homoserine + CoA. It participates in amino-acid biosynthesis; L-methionine biosynthesis via de novo pathway; O-acetyl-L-homoserine from L-homoserine: step 1/1. Its function is as follows. Transfers an acetyl group from acetyl-CoA to L-homoserine, forming acetyl-L-homoserine. This chain is Homoserine O-acetyltransferase, found in Trichormus variabilis (strain ATCC 29413 / PCC 7937) (Anabaena variabilis).